Consider the following 220-residue polypeptide: MEAFLQRIASRLGRDVRTSVERPQWKHAPQQTVFQGYSQNELLDVLKQQCTRIHTTFVETNSAELRDTLQQVIAAHGGGPIVVANDERYEQFGLSSFLQREDVYVWDATRGRDNIEAAERANIGMTWSDITLAESGTVVLLNNRDQGRTISFLPTTYVALIPKSTIVPRMTQAAHIIREKHVPSCINFITGPSNSADIEMNLVVGVHGPVKATYIVITDR.

This sequence belongs to the LutC/YkgG family.

Is involved in L-lactate degradation and allows cells to grow with lactate as the sole carbon source. The chain is Lactate utilization protein C from Anoxybacillus flavithermus (strain DSM 21510 / WK1).